A 391-amino-acid polypeptide reads, in one-letter code: Secreted aspartic protease 1 (391 aa).

The signal sequence occupies residues 1-18 (MFLKNIFIALAIALLVDA). The propeptide at 19–50 (SPAKRSPGFVTLDFDVIKTPVNATGQEGKVKR) is activation peptide. Residue asparagine 40 is glycosylated (N-linked (GlcNAc...) asparagine). The region spanning 64–377 (YAADITIGSN…DLDDDKISLA (314 aa)) is the Peptidase A1 domain. Aspartate 82 is an active-site residue. 82–84 (DTG) is a pepstatin A binding site. Cysteine 97 and cysteine 109 form a disulfide bridge. Residues aspartate 241 and aspartate 263 each coordinate Zn(2+). Aspartate 267 is a catalytic residue. 267-271 (DSGTT) is a pepstatin A binding site. Cysteine 305 and cysteine 343 are oxidised to a cystine.

The protein belongs to the peptidase A1 family. As to quaternary structure, monomer.

The protein resides in the secreted. The catalysed reaction is Preferential cleavage at the carboxyl of hydrophobic amino acids, but fails to cleave 15-Leu-|-Tyr-16, 16-Tyr-|-Leu-17 and 24-Phe-|-Phe-25 of insulin B chain. Activates trypsinogen, and degrades keratin.. Its activity is regulated as follows. Inhibited by pepstatin A analogs and squash aspartic peptidase inhibitor (SQAPI). Functionally, secreted aspartic peptidases (SAPs) are a group of ten acidic hydrolases considered as key virulence factors. These enzymes supply the fungus with nutrient amino acids as well as are able to degrade the selected host's proteins involved in the immune defense. Induces host inflammatory cytokine production in a proteolytic activity-independent way. Plays a role in tissue damage during superficial infection. Moreover, acts toward human hemoglobin though limited proteolysis to generate a variety of antimicrobial hemocidins, enabling to compete with the other microorganisms of the same physiological niche using the microbicidal peptides generated from the host protein. Its function is as follows. Plays a key role in defense against host by cleaving histatin-5 (Hst 5), a peptide from human saliva that carries out fungicidal activity. The cleavage rate decreases in an order of SAP2 &gt; SAP9 &gt; SAP3 &gt; SAP7 &gt; SAP4 &gt; SAP1 &gt; SAP8. The first cleavage occurs between residues 'Lys-17' and 'His-18' of Hst 5, giving DSHAKRHHGYKRKFHEK and HHSHRGY peptides. Further fragmentation by SAP1 results in AKRHHGYKRKFHEK and AKRHHGY products. This chain is Secreted aspartic protease 1, found in Candida albicans (Yeast).